The following is a 198-amino-acid chain: Inner membrane-spanning protein YciB (198 aa).

The next 5 membrane-spanning stretches (helical) occupy residues 36–56, 67–87, 90–110, 133–153, and 162–182; these read IFSATAMLIISSVVVYGILYI, LTLVACLVFGSLTLAFHSETF, WKAPVVNWLFAVAFAGSHFIG, LNIAWIIFFLFCGAANLYVAF, and FKVFGSLGMTLIFLVGQGIYL.

Belongs to the YciB family.

It localises to the cell inner membrane. Functionally, plays a role in cell envelope biogenesis, maintenance of cell envelope integrity and membrane homeostasis. This is Inner membrane-spanning protein YciB from Pseudomonas syringae pv. tomato (strain ATCC BAA-871 / DC3000).